A 409-amino-acid chain; its full sequence is Serine/threonine transporter SstT (409 aa).

A run of 9 helical transmembrane segments spans residues 24–44, 48–68, 82–102, 142–162, 194–214, 218–238, 292–312, 319–339, and 365–385; these read LALG…AGLF, FVGA…AATI, IIVL…IAGM, AIAN…GAAL, LGIF…ALAG, LLAV…PAIV, IPLG…VLAM, GIQV…VSAC, and VAMQ…SAET.

This sequence belongs to the dicarboxylate/amino acid:cation symporter (DAACS) (TC 2.A.23) family.

Its subcellular location is the cell inner membrane. It catalyses the reaction L-serine(in) + Na(+)(in) = L-serine(out) + Na(+)(out). It carries out the reaction L-threonine(in) + Na(+)(in) = L-threonine(out) + Na(+)(out). Its function is as follows. Involved in the import of serine and threonine into the cell, with the concomitant import of sodium (symport system). The protein is Serine/threonine transporter SstT of Neisseria meningitidis serogroup C / serotype 2a (strain ATCC 700532 / DSM 15464 / FAM18).